Consider the following 310-residue polypeptide: GMP synthase [glutamine-hydrolyzing] subunit B (310 aa).

The GMPS ATP-PPase domain occupies 2 to 185 (FKTEPFIEES…LGLPDQIAHR (184 aa)). 29–35 (SGGVDSS) lines the ATP pocket.

Heterodimer composed of a glutamine amidotransferase subunit (A) and a GMP-binding subunit (B).

The enzyme catalyses XMP + L-glutamine + ATP + H2O = GMP + L-glutamate + AMP + diphosphate + 2 H(+). It participates in purine metabolism; GMP biosynthesis; GMP from XMP (L-Gln route): step 1/1. Its function is as follows. Catalyzes the synthesis of GMP from XMP. This Methanococcus maripaludis (strain C7 / ATCC BAA-1331) protein is GMP synthase [glutamine-hydrolyzing] subunit B.